A 658-amino-acid chain; its full sequence is Pentatricopeptide repeat-containing protein At1g69290 (658 aa).

Disordered stretches follow at residues Met-1–Ser-23 and Thr-39–Phe-61. A compositionally biased stretch (polar residues) spans Pro-50–Phe-61. PPR repeat units lie at residues Asp-214–Pro-249, Asp-250–Ser-284, Arg-285–Ser-320, Ser-323–Leu-353, Asp-361–Ser-395, Gly-397–Leu-431, Asp-432–Asp-466, Leu-467–Asp-497, Asn-503–Pro-537, Asn-538–Lys-568, and Asp-581–Val-615.

This sequence belongs to the PPR family. P subfamily.

The sequence is that of Pentatricopeptide repeat-containing protein At1g69290 from Arabidopsis thaliana (Mouse-ear cress).